A 331-amino-acid chain; its full sequence is MGTPQKDVIIKSDAPDTLLLEKHADYIASYGSKKDDYEYCMSEYLRMSGIYWGLTVMDLMGQLHRMNREEILTFIKSCQHECGGISASIGHDPHLLYTLSAVQILTLYDSINVIDINKVVEYVQSLQKEDGSFAGDIWGEIDTRFSFCAVATLALLGKLDAINVEKAIEFVLSCMNFDGGFGCRPGSESHAGQIYCCTGFLAITSQLHQVNSDLLGWWLCERQLPSGGLNGRPEKLPDVCYSWWVLASLKIIGRLHWIDREKLRSFILACQDEETGGFADRPGDMVDPFHTLFGIAGLSLLGEEQIKPVSPVFCMPEEVLRRVNVQPELVS.

Gly-2 carries the N-acetylglycine modification. Thr-3 carries the phosphothreonine modification. PFTB repeat units follow at residues 20 to 61 (LEKH…DLMG), 68 to 109 (REEI…TLYD), 116 to 157 (INKV…ALLG), 164 to 205 (VEKA…AITS), 212 to 253 (SDLL…KIIG), and 260 to 302 (REKL…SLLG). 190–192 (HAG) is a geranylgeranyl diphosphate binding site. Zn(2+) is bound by residues Asp-238 and Cys-240. A geranylgeranyl diphosphate-binding site is contributed by 241–244 (YSWW). Residue His-290 coordinates Zn(2+).

This sequence belongs to the protein prenyltransferase subunit beta family. As to quaternary structure, heterotrimer composed of RABGGTA, RABGGTB and CHM; within this trimer, RABGGTA and RABGGTB form the catalytic component B, while CHM (component A) mediates peptide substrate binding. The Rab GGTase dimer (RGGT) interacts with CHM (component A) prior to Rab protein binding; the association is stabilized by geranylgeranyl pyrophosphate (GGpp). The CHM:RGGT:Rab complex is destabilized by GGpp. Interaction of RABGGTB with prenylated PTP4A2 precludes its association with RABGGTA and inhibits enzyme activity. Interacts with CHODL. Interacts with non-phosphorylated form of RAB8A; phosphorylation of RAB8A at 'Thr-72' disrupts this interaction. The cofactor is Zn(2+).

The catalysed reaction is geranylgeranyl diphosphate + L-cysteinyl-[protein] = S-geranylgeranyl-L-cysteinyl-[protein] + diphosphate. Its activity is regulated as follows. The enzymatic reaction requires the aid of a Rab escort protein (also called component A). Its function is as follows. Catalyzes the transfer of a geranylgeranyl moiety from geranylgeranyl diphosphate to both cysteines of Rab proteins with the C-terminal sequence -XXCC, -XCXC and -CCXX, such as RAB1A, RAB3A, RAB5A and RAB7A. This is Geranylgeranyl transferase type-2 subunit beta (RABGGTB) from Bos taurus (Bovine).